The primary structure comprises 595 residues: Aspartate--tRNA ligase (595 aa).

Glutamate 171 contacts L-aspartate. The tract at residues 195–198 is aspartate; it reads QLFK. An L-aspartate-binding site is contributed by arginine 217. ATP-binding positions include 217–219 and glutamine 226; that span reads RDE. Histidine 448 lines the L-aspartate pocket. Glutamate 482 contributes to the ATP binding site. Residue arginine 489 coordinates L-aspartate. 534 to 537 serves as a coordination point for ATP; the sequence is GLDR.

This sequence belongs to the class-II aminoacyl-tRNA synthetase family. Type 1 subfamily. As to quaternary structure, homodimer.

Its subcellular location is the cytoplasm. The enzyme catalyses tRNA(Asp) + L-aspartate + ATP = L-aspartyl-tRNA(Asp) + AMP + diphosphate. Functionally, catalyzes the attachment of L-aspartate to tRNA(Asp) in a two-step reaction: L-aspartate is first activated by ATP to form Asp-AMP and then transferred to the acceptor end of tRNA(Asp). This chain is Aspartate--tRNA ligase, found in Erwinia tasmaniensis (strain DSM 17950 / CFBP 7177 / CIP 109463 / NCPPB 4357 / Et1/99).